The primary structure comprises 367 residues: Queuine tRNA-ribosyltransferase (367 aa).

The active-site Proton acceptor is the D91. Residues 91–95 (DSGGF), D145, Q188, and G215 contribute to the substrate site. D265 functions as the Nucleophile in the catalytic mechanism. An RNA binding; important for wobble base 34 recognition region spans residues 270-274 (TRVAR). Zn(2+)-binding residues include C303, C305, C308, and H334.

This sequence belongs to the queuine tRNA-ribosyltransferase family. Homodimer. Within each dimer, one monomer is responsible for RNA recognition and catalysis, while the other monomer binds to the replacement base PreQ1. Zn(2+) serves as cofactor.

The enzyme catalyses 7-aminomethyl-7-carbaguanine + guanosine(34) in tRNA = 7-aminomethyl-7-carbaguanosine(34) in tRNA + guanine. It participates in tRNA modification; tRNA-queuosine biosynthesis. Catalyzes the base-exchange of a guanine (G) residue with the queuine precursor 7-aminomethyl-7-deazaguanine (PreQ1) at position 34 (anticodon wobble position) in tRNAs with GU(N) anticodons (tRNA-Asp, -Asn, -His and -Tyr). Catalysis occurs through a double-displacement mechanism. The nucleophile active site attacks the C1' of nucleotide 34 to detach the guanine base from the RNA, forming a covalent enzyme-RNA intermediate. The proton acceptor active site deprotonates the incoming PreQ1, allowing a nucleophilic attack on the C1' of the ribose to form the product. After dissociation, two additional enzymatic reactions on the tRNA convert PreQ1 to queuine (Q), resulting in the hypermodified nucleoside queuosine (7-(((4,5-cis-dihydroxy-2-cyclopenten-1-yl)amino)methyl)-7-deazaguanosine). This chain is Queuine tRNA-ribosyltransferase, found in Thermosipho africanus (strain TCF52B).